We begin with the raw amino-acid sequence, 329 residues long: Beta-ribofuranosylphenol 5'-phosphate synthase (329 aa).

It belongs to the beta-RFA-P synthase family. Homodimer. The cofactor is Mg(2+).

It carries out the reaction 5-phospho-alpha-D-ribose 1-diphosphate + 4-hydroxybenzoate + H(+) = 4-(beta-D-ribofuranosyl)phenol 5'-phosphate + CO2 + diphosphate. The enzyme catalyses 4-aminobenzoate + 5-phospho-alpha-D-ribose 1-diphosphate + H(+) = 4-(beta-D-ribofuranosyl)aminobenzene 5'-phosphate + CO2 + diphosphate. It participates in cofactor biosynthesis; 5,6,7,8-tetrahydromethanopterin biosynthesis. Its function is as follows. Catalyzes the condensation of 4-hydroxybenzoate (HB) with 5-phospho-alpha-D-ribose 1-diphosphate (PRPP) to produce beta-ribofuranosylphenol 5'-phosphate (beta-RFH-P). Also catalyzes the condensation of 4-aminobenzoate (pABA) with PRPP to produce beta-ribofuranosylaminobenzene 5'-phosphate (beta-RFA-P). Only 4-hydroxybenzoate is known to be biosynthesized by methanogenic archaea, but 4-aminobenzoate can be used as substrate by growing methanogens when it is present in the growth medium. The polypeptide is Beta-ribofuranosylphenol 5'-phosphate synthase (Methanothermobacter thermautotrophicus (strain ATCC 29096 / DSM 1053 / JCM 10044 / NBRC 100330 / Delta H) (Methanobacterium thermoautotrophicum)).